The chain runs to 168 residues: Cofilin-1-A (168 aa).

The residue at position 2 (A2) is an N-acetylalanine. The 150-residue stretch at 4–153 folds into the ADF-H domain; the sequence is GVMVSDDVIK…NDPCNLADKL (150 aa). Residues 30–34 carry the Nuclear localization signal motif; it reads KKRKK.

The protein belongs to the actin-binding proteins ADF family. Post-translationally, inactive when phosphorylated. Phosphorylation levels vary during development. Oocytes contain only the phosphorylated form, and 80-95% of cfl1 protein is phosphorylated in unfertilized eggs. Rapid dephosphorylation occurs within 30 minutes after fertilization. Phosphorylation levels increase again between the morula and blastula stages (5-8 hpf) and then decrease again as gastrulation approaches. Dephosphorylated by pdxp. In terms of tissue distribution, expressed diffusely in both animal and vegetal hemispheres of the oocyte. During cleavage, expression accumulates around the cleavage furrow, along the vegetal membrane, and later in the midbody. Strongly expressed in the animal hemisphere during blastula stages, with most cells showing expression by gastrulation. By stage 17, expression is highest in cells of the developing neuroectoderm, and at stage 24 the notochord, neural tube, neural crest, somites and some cells of the archenteron show high expression. By stage 35, expression has declined in the notochord, but remains in the neural tube, epidermis and a layer of cells in the archenteron. Also highly expressed in the retina and neuronal cell bodies at the base of the cement gland but not the cement gland itself. At stage 38, expression is widespread, being highest in the nervous system and retina. In the adult, expression is high in the brain, heart, oocyte, stomach, and low in skeletal muscle.

The protein localises to the nucleus matrix. Its subcellular location is the cytoplasm. The protein resides in the cytoskeleton. It localises to the cell cortex. It is found in the membrane. In terms of biological role, may play a role in the regulation of cell morphology and cytoskeletal organization. Binds to F-actin and exhibits pH-sensitive F-actin depolymerizing activity. Required for formation of the cleavage furrow during cytokinesis. In Xenopus laevis (African clawed frog), this protein is Cofilin-1-A (cfl1-a).